Reading from the N-terminus, the 141-residue chain is Terrelysin (141 aa).

It belongs to the aegerolysin family.

It localises to the cytoplasm. Hemolysins are potential virulence factors. Has hemolytic activity against sheep erythrocytes in vitro. The chain is Terrelysin from Aspergillus terreus (strain NIH 2624 / FGSC A1156).